The chain runs to 347 residues: Probable dual-specificity RNA methyltransferase RlmN (347 aa).

Catalysis depends on Glu-94, which acts as the Proton acceptor. Residues 100-319 (YPSRTIACIS…LDTLVKNGID (220 aa)) enclose the Radical SAM core domain. Cys-107 and Cys-334 form a disulfide bridge. The [4Fe-4S] cluster site is built by Cys-114, Cys-118, and Cys-121. Residues 161–162 (GE), Ser-193, 216–218 (SLH), and Asn-292 contribute to the S-adenosyl-L-methionine site. Cys-334 serves as the catalytic S-methylcysteine intermediate.

It belongs to the radical SAM superfamily. RlmN family. The cofactor is [4Fe-4S] cluster.

The protein resides in the cytoplasm. The catalysed reaction is adenosine(2503) in 23S rRNA + 2 reduced [2Fe-2S]-[ferredoxin] + 2 S-adenosyl-L-methionine = 2-methyladenosine(2503) in 23S rRNA + 5'-deoxyadenosine + L-methionine + 2 oxidized [2Fe-2S]-[ferredoxin] + S-adenosyl-L-homocysteine. It carries out the reaction adenosine(37) in tRNA + 2 reduced [2Fe-2S]-[ferredoxin] + 2 S-adenosyl-L-methionine = 2-methyladenosine(37) in tRNA + 5'-deoxyadenosine + L-methionine + 2 oxidized [2Fe-2S]-[ferredoxin] + S-adenosyl-L-homocysteine. Functionally, specifically methylates position 2 of adenine 2503 in 23S rRNA and position 2 of adenine 37 in tRNAs. This chain is Probable dual-specificity RNA methyltransferase RlmN, found in Petrotoga mobilis (strain DSM 10674 / SJ95).